The chain runs to 183 residues: 2-C-methyl-D-erythritol 2,4-cyclodiphosphate synthase (183 aa).

Asp-8 and His-10 together coordinate a divalent metal cation. Residues 8-10 (DVH) and 34-35 (HS) contribute to the 4-CDP-2-C-methyl-D-erythritol 2-phosphate site. His-42 serves as a coordination point for a divalent metal cation. 4-CDP-2-C-methyl-D-erythritol 2-phosphate-binding positions include 56–58 (DIG), 61–65 (FPDTD), 132–135 (TTEE), and Phe-139.

It belongs to the IspF family. In terms of assembly, homotrimer. Requires a divalent metal cation as cofactor.

The catalysed reaction is 4-CDP-2-C-methyl-D-erythritol 2-phosphate = 2-C-methyl-D-erythritol 2,4-cyclic diphosphate + CMP. Its pathway is isoprenoid biosynthesis; isopentenyl diphosphate biosynthesis via DXP pathway; isopentenyl diphosphate from 1-deoxy-D-xylulose 5-phosphate: step 4/6. Involved in the biosynthesis of isopentenyl diphosphate (IPP) and dimethylallyl diphosphate (DMAPP), two major building blocks of isoprenoid compounds. Catalyzes the conversion of 4-diphosphocytidyl-2-C-methyl-D-erythritol 2-phosphate (CDP-ME2P) to 2-C-methyl-D-erythritol 2,4-cyclodiphosphate (ME-CPP) with a corresponding release of cytidine 5-monophosphate (CMP). The protein is 2-C-methyl-D-erythritol 2,4-cyclodiphosphate synthase of Lachnospira eligens (strain ATCC 27750 / DSM 3376 / VPI C15-48 / C15-B4) (Eubacterium eligens).